The chain runs to 868 residues: Leucine--tRNA ligase (868 aa).

The 'HIGH' region signature appears at 42–52; that stretch reads PYPSGKLHMGH. The short motif at 627–631 is the 'KMSKS' region element; that stretch reads KMSKS. Residue K630 coordinates ATP.

It belongs to the class-I aminoacyl-tRNA synthetase family.

Its subcellular location is the cytoplasm. It carries out the reaction tRNA(Leu) + L-leucine + ATP = L-leucyl-tRNA(Leu) + AMP + diphosphate. In Pseudomonas syringae pv. syringae (strain B728a), this protein is Leucine--tRNA ligase.